The following is a 259-amino-acid chain: Probable 6-phosphogluconolactonase 2 (259 aa).

This sequence belongs to the glucosamine/galactosamine-6-phosphate isomerase family. 6-phosphogluconolactonase subfamily.

Its subcellular location is the cytoplasm. The protein resides in the cytosol. It carries out the reaction 6-phospho-D-glucono-1,5-lactone + H2O = 6-phospho-D-gluconate + H(+). It functions in the pathway carbohydrate degradation; pentose phosphate pathway; D-ribulose 5-phosphate from D-glucose 6-phosphate (oxidative stage): step 2/3. In terms of biological role, catalyzes the hydrolysis of 6-phosphogluconolactone to 6-phosphogluconate. The protein is Probable 6-phosphogluconolactonase 2 of Arabidopsis thaliana (Mouse-ear cress).